The sequence spans 287 residues: MRFLAYFGHLNIDVLISVDSIPREGSVNVKDLRPRFGGTAGNFAIVAQKFRIPFDLYSAVGMKTHREYLAMIESMGINTGHVEKFEDESGPICYIATDGKKQVSFMHQGAMEKWKPQLADEYEYVHFSTGPNYLDMAKSIRSKIIFDPSQEIHKYSKDELKKFHEISYMSIFNDHEYRVFREMTGLSSPKVTTIVTNGERGSSLFMDGKKYDFPAIPSSGDTVGAGDSFRAGLYLALYNRRSIEKGMIYGTIIAHHVIDDGIENFSLNMEDLERETENYRRMFTKRS.

4 residues coordinate substrate: Asp-13, Asn-28, Gly-38, and Asn-42. Gln-102 serves as a coordination point for ATP. 2 residues coordinate substrate: Ser-104 and Gln-150. Residues Asn-173 and 196–201 each bind ATP; that span reads TNGERG. Asp-227 contributes to the substrate binding site. Catalysis depends on Asp-227, which acts as the Proton acceptor.

It belongs to the carbohydrate kinase PfkB family. In terms of assembly, homodimer. Mg(2+) is required as a cofactor. The cofactor is Co(2+).

It carries out the reaction adenosine + ATP = AMP + ADP + H(+). The catalysed reaction is cytidine + ATP = CMP + ADP + H(+). The enzyme catalyses guanosine + ATP = GMP + ADP + H(+). It catalyses the reaction inosine + ATP = IMP + ADP + H(+). Nucleoside kinase with broad substrate specificity. Catalyzes the phosphorylation of a variety of nucleosides to the corresponding nucleoside 5'-mono-phosphate in the presence of phosphate donors and divalent cations. Displays the most efficient activity with guanosine, followed by inosine, cytidine, and adenosine. Negligible enzymatic activity is detected with thymidine, uridine, and 2-deoxyadenosine. ATP is the most efficient phosphate donor, but can also use GTP and ITP. Shows no sugar kinase activity, since it is unable to phosphorylate ribose, fructose-1-phosphate, or fructose-6-phosphate. This Thermoplasma acidophilum (strain ATCC 25905 / DSM 1728 / JCM 9062 / NBRC 15155 / AMRC-C165) protein is Nucleoside kinase.